Consider the following 552-residue polypeptide: CTP synthase (552 aa).

Residues 1 to 270 (MTKYVFVTGG…DRIICDELKL (270 aa)) are amidoligase domain. Serine 13 provides a ligand contact to CTP. UTP is bound at residue serine 13. ATP contacts are provided by residues 14–19 (SLGKGI) and aspartate 71. Residues aspartate 71 and glutamate 144 each contribute to the Mg(2+) site. CTP is bound by residues 151–153 (DIE), 191–196 (KTKPTQ), and lysine 227. UTP-binding positions include 191-196 (KTKPTQ) and lysine 227. In terms of domain architecture, Glutamine amidotransferase type-1 spans 295-547 (TIGMVGKYVD…VEAALANKQA (253 aa)). Glycine 356 lines the L-glutamine pocket. Cysteine 383 acts as the Nucleophile; for glutamine hydrolysis in catalysis. L-glutamine contacts are provided by residues 384 to 387 (LGMQ), glutamate 407, and arginine 473. Residues histidine 520 and glutamate 522 contribute to the active site.

It belongs to the CTP synthase family. As to quaternary structure, homotetramer.

The enzyme catalyses UTP + L-glutamine + ATP + H2O = CTP + L-glutamate + ADP + phosphate + 2 H(+). The catalysed reaction is L-glutamine + H2O = L-glutamate + NH4(+). It carries out the reaction UTP + NH4(+) + ATP = CTP + ADP + phosphate + 2 H(+). It participates in pyrimidine metabolism; CTP biosynthesis via de novo pathway; CTP from UDP: step 2/2. With respect to regulation, allosterically activated by GTP, when glutamine is the substrate; GTP has no effect on the reaction when ammonia is the substrate. The allosteric effector GTP functions by stabilizing the protein conformation that binds the tetrahedral intermediate(s) formed during glutamine hydrolysis. Inhibited by the product CTP, via allosteric rather than competitive inhibition. Functionally, catalyzes the ATP-dependent amination of UTP to CTP with either L-glutamine or ammonia as the source of nitrogen. Regulates intracellular CTP levels through interactions with the four ribonucleotide triphosphates. In Burkholderia vietnamiensis (strain G4 / LMG 22486) (Burkholderia cepacia (strain R1808)), this protein is CTP synthase.